The chain runs to 428 residues: Enolase (428 aa).

Q162 contributes to the (2R)-2-phosphoglycerate binding site. E204 acts as the Proton donor in catalysis. The Mg(2+) site is built by D241, E282, and D309. (2R)-2-phosphoglycerate-binding residues include K334, R363, S364, and K385. K334 (proton acceptor) is an active-site residue.

The protein belongs to the enolase family. Mg(2+) is required as a cofactor.

The protein localises to the cytoplasm. It is found in the secreted. It localises to the cell surface. It carries out the reaction (2R)-2-phosphoglycerate = phosphoenolpyruvate + H2O. The protein operates within carbohydrate degradation; glycolysis; pyruvate from D-glyceraldehyde 3-phosphate: step 4/5. Its function is as follows. Catalyzes the reversible conversion of 2-phosphoglycerate (2-PG) into phosphoenolpyruvate (PEP). It is essential for the degradation of carbohydrates via glycolysis. The polypeptide is Enolase (Mycobacterium marinum (strain ATCC BAA-535 / M)).